The chain runs to 1082 residues: Error-prone DNA polymerase (1082 aa).

The protein belongs to the DNA polymerase type-C family. DnaE2 subfamily.

It is found in the cytoplasm. The enzyme catalyses DNA(n) + a 2'-deoxyribonucleoside 5'-triphosphate = DNA(n+1) + diphosphate. In terms of biological role, DNA polymerase involved in damage-induced mutagenesis and translesion synthesis (TLS). It is not the major replicative DNA polymerase. In Xanthomonas campestris pv. campestris (strain 8004), this protein is Error-prone DNA polymerase.